We begin with the raw amino-acid sequence, 431 residues long: 3-phosphoshikimate 1-carboxyvinyltransferase (431 aa).

Residues K21, S22, and R26 each contribute to the 3-phosphoshikimate site. K21 contributes to the phosphoenolpyruvate binding site. Phosphoenolpyruvate is bound by residues G93 and R122. 3-phosphoshikimate-binding residues include S167, Q169, D318, and K345. Q169 lines the phosphoenolpyruvate pocket. Residue D318 is the Proton acceptor of the active site. Residues R349 and R391 each coordinate phosphoenolpyruvate.

The protein belongs to the EPSP synthase family. Monomer.

Its subcellular location is the cytoplasm. It catalyses the reaction 3-phosphoshikimate + phosphoenolpyruvate = 5-O-(1-carboxyvinyl)-3-phosphoshikimate + phosphate. The protein operates within metabolic intermediate biosynthesis; chorismate biosynthesis; chorismate from D-erythrose 4-phosphate and phosphoenolpyruvate: step 6/7. Functionally, catalyzes the transfer of the enolpyruvyl moiety of phosphoenolpyruvate (PEP) to the 5-hydroxyl of shikimate-3-phosphate (S3P) to produce enolpyruvyl shikimate-3-phosphate and inorganic phosphate. The protein is 3-phosphoshikimate 1-carboxyvinyltransferase of Roseiflexus castenholzii (strain DSM 13941 / HLO8).